We begin with the raw amino-acid sequence, 148 residues long: Large ribosomal subunit protein cL37 (148 aa).

The N-terminal 65 residues, 1 to 65 (MALLCFNSLP…SSHGRIVVKA (65 aa)), are a transit peptide targeting the chloroplast. Alanine 66 bears the N-acetylalanine mark. Positions 125–148 (LVRKRKMRKKGRWPPSKMKKNKNV) are disordered.

This sequence belongs to the chloroplast-specific ribosomal protein cL37 family. In terms of assembly, part of the 50S ribosomal subunit.

The protein resides in the plastid. It is found in the chloroplast. The sequence is that of Large ribosomal subunit protein cL37 (PSRP5) from Arabidopsis thaliana (Mouse-ear cress).